The primary structure comprises 546 residues: Chaperonin GroEL 4 (546 aa).

ATP contacts are provided by residues 30 to 33 (TLGP), Lys51, 87 to 91 (DGTTT), Gly415, and Asp495. A disordered region spans residues 524-546 (APKDTPAAGQPGGPGAGGPGLDF). Residues 533 to 546 (QPGGPGAGGPGLDF) are compositionally biased toward gly residues.

This sequence belongs to the chaperonin (HSP60) family. In terms of assembly, forms a cylinder of 14 subunits composed of two heptameric rings stacked back-to-back. Interacts with the co-chaperonin GroES.

It is found in the cytoplasm. It carries out the reaction ATP + H2O + a folded polypeptide = ADP + phosphate + an unfolded polypeptide.. Its function is as follows. Together with its co-chaperonin GroES, plays an essential role in assisting protein folding. The GroEL-GroES system forms a nano-cage that allows encapsulation of the non-native substrate proteins and provides a physical environment optimized to promote and accelerate protein folding. The protein is Chaperonin GroEL 4 of Paraburkholderia xenovorans (strain LB400).